Here is a 679-residue protein sequence, read N- to C-terminus: Altered inheritance of mitochondria protein 21 (679 aa).

The interval 1-95 (MPSEVTPKVP…EELNNVMNNT (95 aa)) is disordered. A compositionally biased stretch (basic and acidic residues) spans 9–19 (VPERPSRRKTS). At Thr18 the chain carries Phosphothreonine. Position 36 is a phosphoserine (Ser36). Phosphothreonine is present on Thr58. Ser70 is subject to Phosphoserine. Thr85 bears the Phosphothreonine mark. The span at 86-95 (EELNNVMNNT) shows a compositional bias: polar residues. Ser104 is modified (phosphoserine). Disordered regions lie at residues 107 to 522 (SKHN…EKIE) and 548 to 679 (LMDT…FHSL). A compositionally biased stretch (basic residues) spans 109–119 (HNIHSVSRKKS). Composition is skewed to polar residues over residues 133-149 (QNGQ…TNPS) and 164-178 (SAIS…SNNE). A compositionally biased stretch (basic and acidic residues) spans 179–213 (VTEHSDSEDLTEKQKVHAALDNEAGDGSHFEEKLI). Residues Ser183, Ser206, and Ser231 each carry the phosphoserine modification. The segment covering 243-272 (SDDKAEKFTKHPESSLEELQKHQEQQEEKI) has biased composition (basic and acidic residues). Thr277 is subject to Phosphothreonine. Ser284 is subject to Phosphoserine. A compositionally biased stretch (polar residues) spans 296-323 (EVNSQPQGPSDTETVIAATSSNVPSQIA). The residue at position 324 (Ser324) is a Phosphoserine. 2 stretches are compositionally biased toward basic and acidic residues: residues 339–351 (KKDF…KEEL) and 372–383 (EESKIPKIPSER). Positions 383–396 (RPKRRAPPPVPKKP) are interaction with SH3 domain of ABP1. Polar residues-rich tracts occupy residues 414 to 427 (DLHN…TTAS) and 437 to 452 (SSIT…TSKL). Positions 471–482 (LEKKLSSPDTES) are enriched in basic and acidic residues. Over residues 483–492 (KLGTQDQSQA) the composition is skewed to polar residues. Residues 501–512 (RRGRGPRGRKLP) show a composition bias toward basic residues. Thr552 is modified (phosphothreonine). The segment covering 556–576 (QAERALDEKSKSIPEEQREQS) has biased composition (basic and acidic residues). Phosphoserine is present on Ser576. Polar residues predominate over residues 603–613 (PLSQLPQTNAV). 8 positions are modified to phosphoserine: Ser620, Ser623, Ser625, Ser627, Ser667, Ser671, Ser675, and Ser678. The span at 667-679 (SALHSEEASFHSL) shows a compositional bias: basic and acidic residues.

The protein belongs to the AIM21 family. Interacts with ribosomes. Interacts with ABP1.

The protein resides in the cytoplasm. It is found in the cytoskeleton. It localises to the actin patch. Involved in mitochondrial migration along actin filaments. This Saccharomyces cerevisiae (strain YJM789) (Baker's yeast) protein is Altered inheritance of mitochondria protein 21 (AIM21).